A 30-amino-acid chain; its full sequence is Photosystem I reaction center subunit XII (30 aa).

The helical transmembrane segment at 7–29 (LIAFFLAFTAGILAIKLGQALYD) threads the bilayer.

This sequence belongs to the PsaM family.

Its subcellular location is the plastid. It localises to the chloroplast thylakoid membrane. The chain is Photosystem I reaction center subunit XII from Pinus thunbergii (Japanese black pine).